We begin with the raw amino-acid sequence, 429 residues long: Bifunctional protein GlmU (429 aa).

The pyrophosphorylase stretch occupies residues 1–223 (MKTSILILAA…EDEFMGINDK (223 aa)). Residues 8-11 (LAAG), lysine 22, and 81-82 (GT) contribute to the UDP-N-acetyl-alpha-D-glucosamine site. Aspartate 102 is a binding site for Mg(2+). Positions 135, 149, 164, and 221 each coordinate UDP-N-acetyl-alpha-D-glucosamine. Asparagine 221 contributes to the Mg(2+) binding site. A linker region spans residues 224 to 244 (FELSIAENFMQEKIKKYWMQQ). Residues 245 to 429 (GVIFHLPQST…KDYYYKKFQK (185 aa)) form an N-acetyltransferase region. Arginine 308 and lysine 325 together coordinate UDP-N-acetyl-alpha-D-glucosamine. Residue histidine 336 is the Proton acceptor of the active site. Positions 339 and 350 each coordinate UDP-N-acetyl-alpha-D-glucosamine. Acetyl-CoA is bound by residues 359–360 (NY), serine 378, alanine 396, and arginine 413.

It in the N-terminal section; belongs to the N-acetylglucosamine-1-phosphate uridyltransferase family. The protein in the C-terminal section; belongs to the transferase hexapeptide repeat family. In terms of assembly, homotrimer. Mg(2+) serves as cofactor.

It is found in the cytoplasm. The enzyme catalyses alpha-D-glucosamine 1-phosphate + acetyl-CoA = N-acetyl-alpha-D-glucosamine 1-phosphate + CoA + H(+). The catalysed reaction is N-acetyl-alpha-D-glucosamine 1-phosphate + UTP + H(+) = UDP-N-acetyl-alpha-D-glucosamine + diphosphate. It participates in nucleotide-sugar biosynthesis; UDP-N-acetyl-alpha-D-glucosamine biosynthesis; N-acetyl-alpha-D-glucosamine 1-phosphate from alpha-D-glucosamine 6-phosphate (route II): step 2/2. Its pathway is nucleotide-sugar biosynthesis; UDP-N-acetyl-alpha-D-glucosamine biosynthesis; UDP-N-acetyl-alpha-D-glucosamine from N-acetyl-alpha-D-glucosamine 1-phosphate: step 1/1. It functions in the pathway bacterial outer membrane biogenesis; LPS lipid A biosynthesis. Functionally, catalyzes the last two sequential reactions in the de novo biosynthetic pathway for UDP-N-acetylglucosamine (UDP-GlcNAc). The C-terminal domain catalyzes the transfer of acetyl group from acetyl coenzyme A to glucosamine-1-phosphate (GlcN-1-P) to produce N-acetylglucosamine-1-phosphate (GlcNAc-1-P), which is converted into UDP-GlcNAc by the transfer of uridine 5-monophosphate (from uridine 5-triphosphate), a reaction catalyzed by the N-terminal domain. This chain is Bifunctional protein GlmU, found in Campylobacter jejuni subsp. jejuni serotype O:23/36 (strain 81-176).